A 163-amino-acid chain; its full sequence is Nucleotide-binding protein BLi01194 (163 aa).

This sequence belongs to the YajQ family.

In terms of biological role, nucleotide-binding protein. In Bacillus licheniformis (strain ATCC 14580 / DSM 13 / JCM 2505 / CCUG 7422 / NBRC 12200 / NCIMB 9375 / NCTC 10341 / NRRL NRS-1264 / Gibson 46), this protein is Nucleotide-binding protein BLi01194.